The chain runs to 602 residues: Peptide-N(4)-(N-acetyl-beta-glucosaminyl)asparagine amidase (602 aa).

The 129-residue stretch at P2–G130 folds into the Thioredoxin domain. 4 residues coordinate Zn(2+): C189, C192, C222, and C225. C248 (nucleophile) is an active-site residue. Catalysis depends on residues H275 and D292. Residues D400 to K602 enclose the PAW domain.

The protein belongs to the transglutaminase-like superfamily. PNGase family. Zn(2+) is required as a cofactor.

It is found in the cytoplasm. The protein localises to the endoplasmic reticulum. It catalyses the reaction Hydrolysis of an N(4)-(acetyl-beta-D-glucosaminyl)asparagine residue in which the glucosamine residue may be further glycosylated, to yield a (substituted) N-acetyl-beta-D-glucosaminylamine and a peptide containing an aspartate residue.. Its function is as follows. Specifically deglycosylates the denatured form of N-linked glycoproteins in the cytoplasm and assists their proteasome-mediated degradation. Cleaves the beta-aspartyl-glucosamine (GlcNAc) of the glycan and the amide side chain of Asn, converting Asn to Asp. Prefers proteins containing high-mannose over those bearing complex type oligosaccharides. Can recognize misfolded proteins in the endoplasmic reticulum that are exported to the cytosol to be destroyed and deglycosylate them, while it has no activity toward native proteins. Deglycosylation is a prerequisite for subsequent proteasome-mediated degradation of some, but not all, misfolded glycoproteins. Also displays oxidoreductase (thioredoxin) activity. The chain is Peptide-N(4)-(N-acetyl-beta-glucosaminyl)asparagine amidase (png-1) from Caenorhabditis briggsae.